A 533-amino-acid polypeptide reads, in one-letter code: CTP synthase (533 aa).

The interval 1–269 (MKKNLKILVI…HEILSSKLNI (269 aa)) is amidoligase domain. Residue serine 16 participates in CTP binding. Serine 16 is a binding site for UTP. ATP is bound by residues 17-22 (GIGKGV) and aspartate 73. Aspartate 73 and glutamate 143 together coordinate Mg(2+). CTP contacts are provided by residues 150 to 152 (DME), 190 to 195 (KSKPTQ), and lysine 226. Residues 190–195 (KSKPTQ) and lysine 226 contribute to the UTP site. A Glutamine amidotransferase type-1 domain is found at 304–533 (YAELDDSYAS…LFLGLIKACI (230 aa)). Residue glycine 355 participates in L-glutamine binding. The active-site Nucleophile; for glutamine hydrolysis is the cysteine 382. L-glutamine contacts are provided by residues 383–386 (LGLQ), glutamate 406, and arginine 466. Active-site residues include histidine 511 and glutamate 513.

Belongs to the CTP synthase family. Homotetramer.

It catalyses the reaction UTP + L-glutamine + ATP + H2O = CTP + L-glutamate + ADP + phosphate + 2 H(+). The catalysed reaction is L-glutamine + H2O = L-glutamate + NH4(+). It carries out the reaction UTP + NH4(+) + ATP = CTP + ADP + phosphate + 2 H(+). The protein operates within pyrimidine metabolism; CTP biosynthesis via de novo pathway; CTP from UDP: step 2/2. With respect to regulation, allosterically activated by GTP, when glutamine is the substrate; GTP has no effect on the reaction when ammonia is the substrate. The allosteric effector GTP functions by stabilizing the protein conformation that binds the tetrahedral intermediate(s) formed during glutamine hydrolysis. Inhibited by the product CTP, via allosteric rather than competitive inhibition. In terms of biological role, catalyzes the ATP-dependent amination of UTP to CTP with either L-glutamine or ammonia as the source of nitrogen. Regulates intracellular CTP levels through interactions with the four ribonucleotide triphosphates. This chain is CTP synthase, found in Borreliella burgdorferi (strain ATCC 35210 / DSM 4680 / CIP 102532 / B31) (Borrelia burgdorferi).